The primary structure comprises 67 residues: Large ribosomal subunit protein bL31 (67 aa).

Residues C16, C18, C36, and C39 each contribute to the Zn(2+) site.

The protein belongs to the bacterial ribosomal protein bL31 family. Type A subfamily. As to quaternary structure, part of the 50S ribosomal subunit. It depends on Zn(2+) as a cofactor.

Its function is as follows. Binds the 23S rRNA. The protein is Large ribosomal subunit protein bL31 of Aliarcobacter butzleri (strain RM4018) (Arcobacter butzleri).